The following is a 200-amino-acid chain: Small ribosomal subunit protein uS4 (200 aa).

The segment at 20–41 (TGTGKELDKRPYAPGQHGPNQR) is disordered. The 61-residue stretch at 92-152 (SRLDNLVYRL…EKSKNLDVVK (61 aa)) folds into the S4 RNA-binding domain.

The protein belongs to the universal ribosomal protein uS4 family. In terms of assembly, part of the 30S ribosomal subunit. Contacts protein S5. The interaction surface between S4 and S5 is involved in control of translational fidelity.

Its function is as follows. One of the primary rRNA binding proteins, it binds directly to 16S rRNA where it nucleates assembly of the body of the 30S subunit. Functionally, with S5 and S12 plays an important role in translational accuracy. This chain is Small ribosomal subunit protein uS4, found in Oceanobacillus iheyensis (strain DSM 14371 / CIP 107618 / JCM 11309 / KCTC 3954 / HTE831).